We begin with the raw amino-acid sequence, 187 residues long: Protein GrpE (187 aa).

The disordered stretch occupies residues 1–31; the sequence is MEKKETKNDAEKNNKQDNKSTKSQKKENLNL.

Belongs to the GrpE family. Homodimer.

It is found in the cytoplasm. Functionally, participates actively in the response to hyperosmotic and heat shock by preventing the aggregation of stress-denatured proteins, in association with DnaK and GrpE. It is the nucleotide exchange factor for DnaK and may function as a thermosensor. Unfolded proteins bind initially to DnaJ; upon interaction with the DnaJ-bound protein, DnaK hydrolyzes its bound ATP, resulting in the formation of a stable complex. GrpE releases ADP from DnaK; ATP binding to DnaK triggers the release of the substrate protein, thus completing the reaction cycle. Several rounds of ATP-dependent interactions between DnaJ, DnaK and GrpE are required for fully efficient folding. This chain is Protein GrpE, found in Borrelia garinii subsp. bavariensis (strain ATCC BAA-2496 / DSM 23469 / PBi) (Borreliella bavariensis).